A 152-amino-acid chain; its full sequence is MALYEHVFLARQDISAQQVDALVEQYKGVIEANGGKVGRIENWGLKSLTYRIKKNRKAHYALMDIDAPAAAIQEMERQMRISEDVLRYMTIAVEKHEEGPSAMLQKRDRDDRGPREGGDRGPRREFGDRPPRRDGDFQRGPRPDRAPREDRA.

A disordered region spans residues His-96 to Ala-152.

The protein belongs to the bacterial ribosomal protein bS6 family.

Functionally, binds together with bS18 to 16S ribosomal RNA. The chain is Small ribosomal subunit protein bS6 from Rhizobium etli (strain CIAT 652).